Reading from the N-terminus, the 425-residue chain is Histone-binding protein RBBP7 (425 aa).

At Ala-2 the chain carries N-acetylalanine. Ser-3 is subject to Phosphoserine. N6-acetyllysine; alternate is present on Lys-4. Residue Lys-4 forms a Glycyl lysine isopeptide (Lys-Gly) (interchain with G-Cter in SUMO2); alternate linkage. Lys-4 participates in a covalent cross-link: Glycyl lysine isopeptide (Lys-Gly) (interchain with G-Cter in ubiquitin); alternate. Thr-10 carries the post-translational modification Phosphothreonine. 7 WD repeats span residues 47–122 (QWLP…KINH), 128–173 (RARY…LRLR), 181–217 (GLSW…KIVD), 228–269 (VVED…HLVD), 275–312 (VNCL…LHTF), 318–369 (EIFQ…LFIH), and 376–403 (ISDF…IWQM). At Ser-95 the chain carries Phosphoserine. Residue Lys-101 forms a Glycyl lysine isopeptide (Lys-Gly) (interchain with G-Cter in SUMO2) linkage. An N6-acetyllysine modification is found at Lys-119. Lys-155 is covalently cross-linked (Glycyl lysine isopeptide (Lys-Gly) (interchain with G-Cter in SUMO2)). The residue at position 159 (Lys-159) is an N6-acetyllysine; alternate. A Glycyl lysine isopeptide (Lys-Gly) (interchain with G-Cter in SUMO2); alternate cross-link involves residue Lys-159. A Phosphoserine modification is found at Ser-354.

Belongs to the WD repeat RBAP46/RBAP48/MSI1 family. In terms of assembly, binds directly to helix 1 of the histone fold of histone H4, a region that is not accessible when H4 is in chromatin. Subunit of the type B histone acetyltransferase (HAT) complex, composed of RBBP7 and HAT1. Subunit of the core histone deacetylase (HDAC) complex, which is composed of HDAC1, HDAC2, RBBP4 and RBBP7. The core HDAC complex associates with SIN3A, ARID4B/SAP180, SAP18, SAP30, SAP130, SUDS3/SAP45 and possibly ARID4A/RBP1 and ING1 to form the SIN3 HDAC complex. Component of the nucleosome remodeling and deacetylase (NuRD) repressor complex, composed of core proteins MTA1, MTA2, MTA3, RBBP4, RBBP7, HDAC1, HDAC2, MBD2, MBD3, and peripherally associated proteins CDK2AP1, CDK2AP2, GATAD2A, GATAD2B, CHD3, CHD4 and CHD5. The exact stoichiometry of the NuRD complex is unknown, and some subunits such as MBD2 and MBD3, GATAD2A and GATAD2B, and CHD3, CHD4 and CHD5 define mutually exclusive NuRD complexes. The NuRD complex may interact with MBD3L1. The NuRD complex may interact with MBD3L2. Subunit of the PRC2/EED-EZH2 complex, which is composed of at least EED, EZH2, RBBP4, RBBP7 and SUZ12. The PRC2/EED-EZH2 complex may also associate with HDAC1. Component of the NURF-1 ISWI chromatin remodeling complex (also called the nucleosome-remodeling factor (NURF) complex) at least composed of SMARCA1, BPTF, RBBP4 and RBBP7. Within the complex interacts with SMARCA1. Component of the BPFT-SMARCA1 complex at least composed of SMARCA1, BPFT, RBBP4 and RBBP7; the complex is catalytically inactive and does not remodel chromatin. Within the complex interacts with SMARCA1. Interacts with BRCA1. Interacts with CDK2AP1. Interacts with CENPA. Interacts with CHD3. Interacts with CHD4. Interacts with CREBBP, and this interaction may be enhanced by the binding of phosphorylated CREB1 to CREBBP. Interacts with HDAC7. Interacts with MTA1. Interacts with PWWP2B. Interacts with RB1 (via viral protein-binding domain). Interacts with SUV39H1. In terms of tissue distribution, higher levels in brain, thymus, lung, spleen, kidney, testis, and ovary/uterus; lower levels in heart, liver, and muscle.

Its subcellular location is the nucleus. Functionally, core histone-binding subunit that may target chromatin remodeling factors, histone acetyltransferases and histone deacetylases to their histone substrates in a manner that is regulated by nucleosomal DNA. Component of several complexes which regulate chromatin metabolism. These include the type B histone acetyltransferase (HAT) complex, which is required for chromatin assembly following DNA replication; the core histone deacetylase (HDAC) complex, which promotes histone deacetylation and consequent transcriptional repression; the nucleosome remodeling and histone deacetylase complex (the NuRD complex), which promotes transcriptional repression by histone deacetylation and nucleosome remodeling; and the PRC2/EED-EZH2 complex, which promotes repression of homeotic genes during development; and the NURF (nucleosome remodeling factor) complex. In Mus musculus (Mouse), this protein is Histone-binding protein RBBP7 (Rbbp7).